A 371-amino-acid chain; its full sequence is Solute carrier family 35 member F6 (371 aa).

The first 18 residues, 1–18, serve as a signal peptide directing secretion; the sequence is MAWTKYQLFLAGLMLVTG. The next 2 helical transmembrane spans lie at 48–68 and 89–109; these read FLQA…FYLL and LLFL…YVAL. One can recognise an EamA domain in the interval 104 to 160; the sequence is LMYVALNMTSASSFQMLRGAVIIFTGLFSVAFLGRRLVLSQWLGILATIAGLVVVGL. An N-linked (GlcNAc...) asparagine glycan is attached at asparagine 110. 7 consecutive transmembrane segments (helical) span residues 117 to 137, 140 to 160, 176 to 196, 216 to 236, 261 to 281, 295 to 312, and 317 to 336; these read FQML…AFLG, LVLS…VVGL, VITG…QMVL, GLFG…IPAG, LIAV…FAGI, LDSL…ALGW, and ALQI…YNGL. Positions 352-371 are disordered; it reads EESEQERLLGGTRTPINDAS. Threonine 365 carries the phosphothreonine modification.

It belongs to the SLC35F solute transporter family. As to quaternary structure, interacts with SLC25A5. As to expression, expressed in pancreatic ductal adenocarcinoma (PDAC) (at protein level). Strongly expressed in prostate and thyroid. Weakly expressed in lung, heart, liver and kidney.

It is found in the mitochondrion. It localises to the lysosome membrane. Involved in the maintenance of mitochondrial membrane potential in pancreatic ductal adenocarcinoma (PDAC) cells. Promotes pancreatic ductal adenocarcinoma (PDAC) cell growth. May play a role as a nucleotide-sugar transporter. The chain is Solute carrier family 35 member F6 (SLC35F6) from Homo sapiens (Human).